We begin with the raw amino-acid sequence, 152 residues long: Ribosomal RNA large subunit methyltransferase H (152 aa).

S-adenosyl-L-methionine contacts are provided by residues Leu-70, Gly-101, and 120-125 (LSDLTF).

The protein belongs to the RNA methyltransferase RlmH family. As to quaternary structure, homodimer.

The protein localises to the cytoplasm. It carries out the reaction pseudouridine(1915) in 23S rRNA + S-adenosyl-L-methionine = N(3)-methylpseudouridine(1915) in 23S rRNA + S-adenosyl-L-homocysteine + H(+). Functionally, specifically methylates the pseudouridine at position 1915 (m3Psi1915) in 23S rRNA. The chain is Ribosomal RNA large subunit methyltransferase H from Pseudothermotoga lettingae (strain ATCC BAA-301 / DSM 14385 / NBRC 107922 / TMO) (Thermotoga lettingae).